The chain runs to 364 residues: Dual-specificity RNA methyltransferase RlmN (364 aa).

The Proton acceptor role is filled by Glu91. A Radical SAM core domain is found at 102–337 (GTLRITQCLS…AIIRKSKGQD (236 aa)). A disulfide bridge connects residues Cys109 and Cys342. The [4Fe-4S] cluster site is built by Cys116, Cys120, and Cys123. S-adenosyl-L-methionine-binding positions include 169–170 (GE), Ser201, 223–225 (SLH), and Asn299. Cys342 acts as the S-methylcysteine intermediate in catalysis.

The protein belongs to the radical SAM superfamily. RlmN family. The cofactor is [4Fe-4S] cluster.

It localises to the cytoplasm. It catalyses the reaction adenosine(2503) in 23S rRNA + 2 reduced [2Fe-2S]-[ferredoxin] + 2 S-adenosyl-L-methionine = 2-methyladenosine(2503) in 23S rRNA + 5'-deoxyadenosine + L-methionine + 2 oxidized [2Fe-2S]-[ferredoxin] + S-adenosyl-L-homocysteine. It carries out the reaction adenosine(37) in tRNA + 2 reduced [2Fe-2S]-[ferredoxin] + 2 S-adenosyl-L-methionine = 2-methyladenosine(37) in tRNA + 5'-deoxyadenosine + L-methionine + 2 oxidized [2Fe-2S]-[ferredoxin] + S-adenosyl-L-homocysteine. Its function is as follows. Specifically methylates position 2 of adenine 2503 in 23S rRNA and position 2 of adenine 37 in tRNAs. m2A2503 modification seems to play a crucial role in the proofreading step occurring at the peptidyl transferase center and thus would serve to optimize ribosomal fidelity. This chain is Dual-specificity RNA methyltransferase RlmN, found in Nitratidesulfovibrio vulgaris (strain ATCC 29579 / DSM 644 / CCUG 34227 / NCIMB 8303 / VKM B-1760 / Hildenborough) (Desulfovibrio vulgaris).